Consider the following 148-residue polypeptide: Phosphoribosyl-AMP cyclohydrolase (148 aa).

A Mg(2+)-binding site is contributed by Asp-91. Cys-92 contacts Zn(2+). Mg(2+)-binding residues include Asp-93 and Asp-95. Residues Cys-109 and Cys-116 each contribute to the Zn(2+) site.

This sequence belongs to the PRA-CH family. In terms of assembly, homodimer. Mg(2+) is required as a cofactor. Requires Zn(2+) as cofactor.

The protein localises to the cytoplasm. It catalyses the reaction 1-(5-phospho-beta-D-ribosyl)-5'-AMP + H2O = 1-(5-phospho-beta-D-ribosyl)-5-[(5-phospho-beta-D-ribosylamino)methylideneamino]imidazole-4-carboxamide. It participates in amino-acid biosynthesis; L-histidine biosynthesis; L-histidine from 5-phospho-alpha-D-ribose 1-diphosphate: step 3/9. In terms of biological role, catalyzes the hydrolysis of the adenine ring of phosphoribosyl-AMP. This Rhodopseudomonas palustris (strain HaA2) protein is Phosphoribosyl-AMP cyclohydrolase.